We begin with the raw amino-acid sequence, 152 residues long: Ribosome maturation factor RimP (152 aa).

This sequence belongs to the RimP family.

The protein resides in the cytoplasm. Functionally, required for maturation of 30S ribosomal subunits. The chain is Ribosome maturation factor RimP from Alkalilimnicola ehrlichii (strain ATCC BAA-1101 / DSM 17681 / MLHE-1).